Reading from the N-terminus, the 262-residue chain is Dehydrin COR410 (262 aa).

Disordered regions lie at residues methionine 1 to aspartate 153 and leucine 187 to alanine 262. Composition is skewed to basic and acidic residues over residues lysine 34–glutamate 45 and valine 53–leucine 74. The span at serine 89–glycine 101 shows a compositional bias: acidic residues. 2 repeat units span residues arginine 106 to threonine 126 and glutamate 173 to lysine 193. A 3 X 21 AA repeats, Lys-rich region spans residues arginine 106 to threonine 245. Basic and acidic residues-rich tracts occupy residues lysine 113 to histidine 130 and leucine 187 to aspartate 196. Low complexity predominate over residues alanine 197–proline 209. The stretch at alanine 225 to threonine 245 is repeat 3. The span at lysine 244 to alanine 262 shows a compositional bias: basic and acidic residues.

In terms of tissue distribution, expressed in roots, crown and leaves during cold acclimation.

The protein is Dehydrin COR410 (COR410) of Triticum aestivum (Wheat).